We begin with the raw amino-acid sequence, 463 residues long: Cytoplasmic 60S subunit biogenesis factor SPCC550.15c (463 aa).

2 C2H2-type zinc fingers span residues 5–30 (FACTTCTVAFNNAESQKIHWKSDWHH) and 70–94 (QNCEVCNKKFYSEGAYSSHMASKKH). The interval 109–136 (KLQSEDASSIASSTLSMGEPVVDSEIEE) is disordered. Residues 113 to 124 (EDASSIASSTLS) are compositionally biased toward polar residues. Residues Ser-150 and Ser-155 each carry the phosphoserine modification. Residues 155–189 (SLHGRESEPSKTELATSIPQSNEASKSHLFTQEPT) form a disordered region. Residues 167–188 (ELATSIPQSNEASKSHLFTQEP) show a composition bias toward polar residues. 2 C2H2-type zinc fingers span residues 208–231 (RDCLFCAASFSSFDTCKKHMKASH) and 259–283 (FTCLTCNREFKSLEAVRAHMQQKGH). The segment covering 317 to 338 (TVVEEDGSSGEGDWEDVSDDSD) has biased composition (acidic residues). 2 disordered regions span residues 317-341 (TVVEEDGSSGEGDWEDVSDDSDNSS) and 444-463 (ANKMGIKNNTKKHFRDALLQ).

This sequence belongs to the REI1 family. In terms of assembly, associates with nascent pre-60S particles that have not yet entered the translating pool, and is released from mature 60S subunits.

It is found in the cytoplasm. Functionally, pre-60S-associated factor involved in the cytoplasmic maturation of the 60S subunit. Involved in the dissociation and recycling of other late pre-60S factors before newly synthesized large ribosomal subunits enter translation. This is Cytoplasmic 60S subunit biogenesis factor SPCC550.15c from Schizosaccharomyces pombe (strain 972 / ATCC 24843) (Fission yeast).